A 222-amino-acid chain; its full sequence is Large ribosomal subunit protein uL1 (222 aa).

This sequence belongs to the universal ribosomal protein uL1 family. In terms of assembly, part of the 50S ribosomal subunit.

Binds directly to 23S rRNA. Probably involved in E site tRNA release. Its function is as follows. Protein L1 is also a translational repressor protein, it controls the translation of its operon by binding to its mRNA. The protein is Large ribosomal subunit protein uL1 of Pyrobaculum arsenaticum (strain DSM 13514 / JCM 11321 / PZ6).